We begin with the raw amino-acid sequence, 364 residues long: Putative glutamate--cysteine ligase 2-2 (364 aa).

This sequence belongs to the glutamate--cysteine ligase type 2 family. YbdK subfamily.

It catalyses the reaction L-cysteine + L-glutamate + ATP = gamma-L-glutamyl-L-cysteine + ADP + phosphate + H(+). Its function is as follows. ATP-dependent carboxylate-amine ligase which exhibits weak glutamate--cysteine ligase activity. This Mycobacterium sp. (strain JLS) protein is Putative glutamate--cysteine ligase 2-2.